We begin with the raw amino-acid sequence, 652 residues long: Threonine--tRNA ligase (652 aa).

Positions 1–64 (MPDVIRITFP…HEDGELVIIT (64 aa)) constitute a TGS domain. Positions 245 to 542 (DHRKLGKELE…LIEEYKGAFP (298 aa)) are catalytic. Zn(2+) is bound by residues cysteine 338, histidine 389, and histidine 519.

The protein belongs to the class-II aminoacyl-tRNA synthetase family. As to quaternary structure, homodimer. It depends on Zn(2+) as a cofactor.

The protein localises to the cytoplasm. The catalysed reaction is tRNA(Thr) + L-threonine + ATP = L-threonyl-tRNA(Thr) + AMP + diphosphate + H(+). Its function is as follows. Catalyzes the attachment of threonine to tRNA(Thr) in a two-step reaction: L-threonine is first activated by ATP to form Thr-AMP and then transferred to the acceptor end of tRNA(Thr). Also edits incorrectly charged L-seryl-tRNA(Thr). The protein is Threonine--tRNA ligase of Geobacillus kaustophilus (strain HTA426).